The following is a 235-amino-acid chain: Putative cobalt transport protein CbiM 2 (235 aa).

Transmembrane regions (helical) follow at residues 9–29, 41–61, 80–100, 107–127, 135–155, 160–180, and 181–201; these read PAGW…MGII, YLPL…LKLP, FGYC…ALLL, TMGA…YAVY, INIY…TYII, LALA…AFFS, and IFAI…ALVF.

It belongs to the CbiM family. In terms of assembly, forms an energy-coupling factor (ECF) transporter complex composed of an ATP-binding protein (A component, CbiO), a transmembrane protein (T component, CbiQ) and 2 possible substrate-capture proteins (S components, CbiM and CbiN) of unknown stoichimetry.

The protein localises to the cell membrane. Its pathway is cofactor biosynthesis; adenosylcobalamin biosynthesis. Functionally, part of the energy-coupling factor (ECF) transporter complex CbiMNOQ involved in cobalt import. In Methanosphaerula palustris (strain ATCC BAA-1556 / DSM 19958 / E1-9c), this protein is Putative cobalt transport protein CbiM 2.